A 197-amino-acid polypeptide reads, in one-letter code: Probable nicotinate-nucleotide adenylyltransferase (197 aa).

The protein belongs to the NadD family.

The catalysed reaction is nicotinate beta-D-ribonucleotide + ATP + H(+) = deamido-NAD(+) + diphosphate. It functions in the pathway cofactor biosynthesis; NAD(+) biosynthesis; deamido-NAD(+) from nicotinate D-ribonucleotide: step 1/1. Functionally, catalyzes the reversible adenylation of nicotinate mononucleotide (NaMN) to nicotinic acid adenine dinucleotide (NaAD). The chain is Probable nicotinate-nucleotide adenylyltransferase from Bordetella parapertussis (strain 12822 / ATCC BAA-587 / NCTC 13253).